Here is a 361-residue protein sequence, read N- to C-terminus: Phospho-N-acetylmuramoyl-pentapeptide-transferase (361 aa).

10 consecutive transmembrane segments (helical) span residues 27 to 47 (ILAS…MIRW), 70 to 90 (GTPT…CLLW), 97 to 117 (SLWL…VDDY), 134 to 154 (YFWQ…NASL), 167 to 187 (TVTW…IVGS), 199 to 219 (GLAI…AYAS), 236 to 256 (TGEL…FLWY), 263 to 283 (VFMG…VAIV), 288 to 308 (LVLL…ILQV), and 338 to 358 (KVIV…LATL).

It belongs to the glycosyltransferase 4 family. MraY subfamily. Mg(2+) serves as cofactor.

The protein resides in the cell inner membrane. The catalysed reaction is UDP-N-acetyl-alpha-D-muramoyl-L-alanyl-gamma-D-glutamyl-meso-2,6-diaminopimeloyl-D-alanyl-D-alanine + di-trans,octa-cis-undecaprenyl phosphate = di-trans,octa-cis-undecaprenyl diphospho-N-acetyl-alpha-D-muramoyl-L-alanyl-D-glutamyl-meso-2,6-diaminopimeloyl-D-alanyl-D-alanine + UMP. It functions in the pathway cell wall biogenesis; peptidoglycan biosynthesis. Its function is as follows. Catalyzes the initial step of the lipid cycle reactions in the biosynthesis of the cell wall peptidoglycan: transfers peptidoglycan precursor phospho-MurNAc-pentapeptide from UDP-MurNAc-pentapeptide onto the lipid carrier undecaprenyl phosphate, yielding undecaprenyl-pyrophosphoryl-MurNAc-pentapeptide, known as lipid I. This Legionella pneumophila (strain Paris) protein is Phospho-N-acetylmuramoyl-pentapeptide-transferase.